The following is a 391-amino-acid chain: Arginine biosynthesis bifunctional protein ArgJ 2 (391 aa).

The substrate site is built by Lys167 and Ser180. Residue Ser180 is the Nucleophile of the active site.

The protein belongs to the ArgJ family. As to quaternary structure, heterotetramer of two alpha and two beta chains.

The protein localises to the cytoplasm. The catalysed reaction is N(2)-acetyl-L-ornithine + L-glutamate = N-acetyl-L-glutamate + L-ornithine. It catalyses the reaction L-glutamate + acetyl-CoA = N-acetyl-L-glutamate + CoA + H(+). It functions in the pathway amino-acid biosynthesis; L-arginine biosynthesis; L-ornithine and N-acetyl-L-glutamate from L-glutamate and N(2)-acetyl-L-ornithine (cyclic): step 1/1. It participates in amino-acid biosynthesis; L-arginine biosynthesis; N(2)-acetyl-L-ornithine from L-glutamate: step 1/4. Functionally, catalyzes two activities which are involved in the cyclic version of arginine biosynthesis: the synthesis of N-acetylglutamate from glutamate and acetyl-CoA as the acetyl donor, and of ornithine by transacetylation between N(2)-acetylornithine and glutamate. The chain is Arginine biosynthesis bifunctional protein ArgJ 2 from Streptomyces clavuligerus.